The chain runs to 202 residues: Small ribosomal subunit protein uS4c (202 aa).

Residues 90–153 form the S4 RNA-binding domain; that stretch reads MRLDNVIFRL…KSEAIISKNI (64 aa).

Belongs to the universal ribosomal protein uS4 family. Part of the 30S ribosomal subunit. Contacts protein S5. The interaction surface between S4 and S5 is involved in control of translational fidelity.

The protein resides in the plastid. The protein localises to the chloroplast. In terms of biological role, one of the primary rRNA binding proteins, it binds directly to 16S rRNA where it nucleates assembly of the body of the 30S subunit. With S5 and S12 plays an important role in translational accuracy. In Cyathophorum bulbosum (Moss), this protein is Small ribosomal subunit protein uS4c (rps4).